The sequence spans 1008 residues: ATP-dependent zinc metalloprotease FTSH 12, chloroplastic (1008 aa).

A chloroplast-targeting transit peptide spans 1-49 (MEIAISYKPNPLISSSTQLLKRSKSFGLVRFPAKYGLGATRKKQLFRVY). Transmembrane regions (helical) follow at residues 154–174 (AALFIYAFALLLSCQRVYVAI) and 427–447 (IHYFMKVFIALLPGILILWFI). 533–540 (GPPGTGKT) contributes to the ATP binding site. Position 769 (histidine 769) interacts with Zn(2+). Glutamate 770 is a catalytic residue. The Zn(2+) site is built by histidine 773 and aspartate 849.

In the N-terminal section; belongs to the AAA ATPase family. The protein in the C-terminal section; belongs to the peptidase M41 family. Zn(2+) is required as a cofactor.

It is found in the plastid. It localises to the chloroplast thylakoid membrane. Functionally, probable ATP-dependent zinc metallopeptidase. The protein is ATP-dependent zinc metalloprotease FTSH 12, chloroplastic (FTSH12) of Arabidopsis thaliana (Mouse-ear cress).